The following is a 480-amino-acid chain: Prostacyclin synthase (480 aa).

A helical transmembrane segment spans residues 1-21 (MMWTALLLVGLSILVIVLYGR). Substrate-binding positions include Arg-104, Leu-110, Asn-277, 338–339 (TR), and Arg-362. Residue Cys-421 participates in heme binding.

The protein belongs to the cytochrome P450 family. Heme serves as cofactor.

Its subcellular location is the endoplasmic reticulum membrane. It catalyses the reaction prostaglandin H2 = prostaglandin I2. It carries out the reaction a hydroperoxyeicosatetraenoate = an oxoeicosatetraenoate + H2O. The enzyme catalyses (15S)-hydroperoxy-(5Z,8Z,11Z,13E)-eicosatetraenoate = 15-oxo-(5Z,8Z,11Z,13E)-eicosatetraenoate + H2O. The catalysed reaction is (15S)-hydroperoxy-(5Z,8Z,11Z,13E)-eicosatetraenoate + AH2 = (15S)-hydroxy-(5Z,8Z,11Z,13E)-eicosatetraenoate + A + H2O. In terms of biological role, catalyzes the isomerization of prostaglandin H2 to prostacyclin (= prostaglandin I2). Functionally, catalyzes the biosynthesis and metabolism of eicosanoids. Catalyzes the isomerization of prostaglandin H2 to prostacyclin (= prostaglandin I2), a potent mediator of vasodilation and inhibitor of platelet aggregation. Additionally, displays dehydratase activity, toward hydroperoxyeicosatetraenoates (HPETEs), especially toward (15S)-hydroperoxy-(5Z,8Z,11Z,13E)-eicosatetraenoate (15(S)-HPETE). This chain is Prostacyclin synthase, found in Danio rerio (Zebrafish).